We begin with the raw amino-acid sequence, 315 residues long: Ribosomal RNA small subunit methyltransferase H (315 aa).

S-adenosyl-L-methionine is bound by residues G33–H35, D52, F84, D106, and Q113. The segment at S294 to L315 is disordered.

It belongs to the methyltransferase superfamily. RsmH family.

Its subcellular location is the cytoplasm. The enzyme catalyses cytidine(1402) in 16S rRNA + S-adenosyl-L-methionine = N(4)-methylcytidine(1402) in 16S rRNA + S-adenosyl-L-homocysteine + H(+). Its function is as follows. Specifically methylates the N4 position of cytidine in position 1402 (C1402) of 16S rRNA. This is Ribosomal RNA small subunit methyltransferase H from Lactobacillus johnsonii (strain CNCM I-12250 / La1 / NCC 533).